Consider the following 117-residue polypeptide: NADPH-dependent 7-cyano-7-deazaguanine reductase (117 aa).

The Thioimide intermediate role is filled by cysteine 31. Aspartate 38 functions as the Proton donor in the catalytic mechanism. Residues 53–55 and 72–73 contribute to the substrate site; these read IEL and YE.

It belongs to the GTP cyclohydrolase I family. QueF type 1 subfamily.

The protein localises to the cytoplasm. The catalysed reaction is 7-aminomethyl-7-carbaguanine + 2 NADP(+) = 7-cyano-7-deazaguanine + 2 NADPH + 3 H(+). It participates in tRNA modification; tRNA-queuosine biosynthesis. Its function is as follows. Catalyzes the NADPH-dependent reduction of 7-cyano-7-deazaguanine (preQ0) to 7-aminomethyl-7-deazaguanine (preQ1). The chain is NADPH-dependent 7-cyano-7-deazaguanine reductase from Chlorobaculum tepidum (strain ATCC 49652 / DSM 12025 / NBRC 103806 / TLS) (Chlorobium tepidum).